The following is a 235-amino-acid chain: Glutathione S-transferase L3 (235 aa).

The 82-residue stretch at 27 to 108 (GTTRLYTSYV…YLDNTFEGPS (82 aa)) folds into the GST N-terminal domain. Glutathione is bound by residues 37-38 (CP), 65-66 (NR), 79-80 (KV), and 92-93 (ES). The region spanning 86-230 (NGKIIGESLD…MDPKEIVEVF (145 aa)) is the GST C-terminal domain.

This sequence belongs to the GST superfamily. Lambda family.

It localises to the cytoplasm. It is found in the cytosol. The catalysed reaction is RX + glutathione = an S-substituted glutathione + a halide anion + H(+). Catalyzes the glutathione-dependent reduction of S-glutathionylquercetin to quercetin. The chain is Glutathione S-transferase L3 (GSTL3) from Arabidopsis thaliana (Mouse-ear cress).